The sequence spans 185 residues: MIPRVFIYRLPQDDPRKNTAIKLVRFGFAQLVDSIKALPSGSIILDPTVKTPLTPSDRVIAESRGLSLIDCSWKRAVDVHTKFIRGKFIRRRLPLLIAANPTHYGKPYILSTIEAVAAALYIMGFKDEAMEVLRLYKWGPNFIIINQKYLERYAAGDLSPERELLGVDDVDNGLEQLMRVLTNGD.

5 residues coordinate S-adenosyl-L-methionine: Thr-19, Ile-69, Leu-93, Tyr-108, and Thr-112.

This sequence belongs to the TDD superfamily. TSR3 family.

Its subcellular location is the cytoplasm. The catalysed reaction is an N(1)-methylpseudouridine in rRNA + S-adenosyl-L-methionine = N(1)-methyl-N(3)-[(3S)-3-amino-3-carboxypropyl]pseudouridine in rRNA + S-methyl-5'-thioadenosine + H(+). Aminocarboxypropyltransferase that catalyzes the aminocarboxypropyl transfer on pseudouridine corresponding to position 914 in M.jannaschii 16S rRNA. It constitutes the last step in biosynthesis of the hypermodified N1-methyl-N3-(3-amino-3-carboxypropyl) pseudouridine (m1acp3-Psi). This is 16S rRNA aminocarboxypropyltransferase from Vulcanisaeta distributa (strain DSM 14429 / JCM 11212 / NBRC 100878 / IC-017).